A 99-amino-acid polypeptide reads, in one-letter code: UPF0235 protein Sbal223_1335 (99 aa).

This sequence belongs to the UPF0235 family.

In Shewanella baltica (strain OS223), this protein is UPF0235 protein Sbal223_1335.